A 133-amino-acid polypeptide reads, in one-letter code: Small ribosomal subunit protein uS11 (133 aa).

It belongs to the universal ribosomal protein uS11 family. Part of the 30S ribosomal subunit. Interacts with proteins S7 and S18. Binds to IF-3.

Its function is as follows. Located on the platform of the 30S subunit, it bridges several disparate RNA helices of the 16S rRNA. Forms part of the Shine-Dalgarno cleft in the 70S ribosome. In Chlamydia pneumoniae (Chlamydophila pneumoniae), this protein is Small ribosomal subunit protein uS11.